The primary structure comprises 400 residues: Bifunctional enzyme IspD/IspF (400 aa).

The tract at residues 1–235 is 2-C-methyl-D-erythritol 4-phosphate cytidylyltransferase; sequence MSLWTVLLAA…LAEAAAPPVP (235 aa). Residues 236–400 form a 2-C-methyl-D-erythritol 2,4-cyclodiphosphate synthase region; it reads VTGYGYDVHR…VALVSGWRRP (165 aa). A divalent metal cation contacts are provided by Asp242 and His244. Residues 242-244 and 276-277 contribute to the 4-CDP-2-C-methyl-D-erythritol 2-phosphate site; these read DVH and HS. His284 contacts a divalent metal cation. 4-CDP-2-C-methyl-D-erythritol 2-phosphate is bound by residues 298–300, 303–307, 374–377, and Phe381; these read DIG, FPDSN, and TTEE.

In the N-terminal section; belongs to the IspD/TarI cytidylyltransferase family. IspD subfamily. It in the C-terminal section; belongs to the IspF family. A divalent metal cation serves as cofactor.

The catalysed reaction is 2-C-methyl-D-erythritol 4-phosphate + CTP + H(+) = 4-CDP-2-C-methyl-D-erythritol + diphosphate. It catalyses the reaction 4-CDP-2-C-methyl-D-erythritol 2-phosphate = 2-C-methyl-D-erythritol 2,4-cyclic diphosphate + CMP. Its pathway is isoprenoid biosynthesis; isopentenyl diphosphate biosynthesis via DXP pathway; isopentenyl diphosphate from 1-deoxy-D-xylulose 5-phosphate: step 2/6. It functions in the pathway isoprenoid biosynthesis; isopentenyl diphosphate biosynthesis via DXP pathway; isopentenyl diphosphate from 1-deoxy-D-xylulose 5-phosphate: step 4/6. In terms of biological role, bifunctional enzyme that catalyzes the formation of 4-diphosphocytidyl-2-C-methyl-D-erythritol from CTP and 2-C-methyl-D-erythritol 4-phosphate (MEP) (IspD), and catalyzes the conversion of 4-diphosphocytidyl-2-C-methyl-D-erythritol 2-phosphate (CDP-ME2P) to 2-C-methyl-D-erythritol 2,4-cyclodiphosphate (ME-CPP) with a corresponding release of cytidine 5-monophosphate (CMP) (IspF). This chain is Bifunctional enzyme IspD/IspF, found in Solidesulfovibrio magneticus (strain ATCC 700980 / DSM 13731 / RS-1) (Desulfovibrio magneticus).